Here is a 626-residue protein sequence, read N- to C-terminus: Nuclear RNA export factor 2 (626 aa).

The residue at position 34 (S34) is a Phosphoserine. Positions 124–203 (WFKVTIPYGI…IFVNHSTAPY (80 aa)) constitute an RRM domain. LRR repeat units follow at residues 271–296 (ELLS…EKAP), 297–320 (KVKT…VKGL), 321–348 (KLEE…AIRD), and 349–376 (CFPK…ETMK). The NTF2 domain maps to 391-541 (LVLQFLQQYY…LCIVNDELFV (151 aa)). The 56-residue stretch at 570–625 (QEQQEMVQAFSAQSGMKLEWSQKCLQDNEWNYTRAGQAFTMLQTEGKIPAEAFKQI) folds into the TAP-C domain.

Belongs to the NXF family. Interacts with NXT1, NXT2, E1B-AP5, the REF proteins and with nucleoporins, Nup62, Nup153 and Nup214. Interacts with LUZP4. As to expression, expressed almost exclusively in testis. Also expressed in several cancers.

It is found in the nucleus. The protein localises to the nucleoplasm. The protein resides in the cytoplasm. Functionally, involved in the export of mRNA from the nucleus to the cytoplasm. The sequence is that of Nuclear RNA export factor 2 (NXF2) from Homo sapiens (Human).